The following is a 276-amino-acid chain: NADPH-dependent 7-cyano-7-deazaguanine reductase (276 aa).

A substrate-binding site is contributed by 80–82 (VES). 82 to 83 (SK) contributes to the NADPH binding site. The active-site Thioimide intermediate is the Cys-183. Asp-190 acts as the Proton donor in catalysis. Position 222–223 (222–223 (HE)) interacts with substrate. Position 251 to 252 (251 to 252 (RG)) interacts with NADPH.

Belongs to the GTP cyclohydrolase I family. QueF type 2 subfamily. Homodimer.

Its subcellular location is the cytoplasm. The enzyme catalyses 7-aminomethyl-7-carbaguanine + 2 NADP(+) = 7-cyano-7-deazaguanine + 2 NADPH + 3 H(+). Its pathway is tRNA modification; tRNA-queuosine biosynthesis. Catalyzes the NADPH-dependent reduction of 7-cyano-7-deazaguanine (preQ0) to 7-aminomethyl-7-deazaguanine (preQ1). In Burkholderia orbicola (strain MC0-3), this protein is NADPH-dependent 7-cyano-7-deazaguanine reductase.